We begin with the raw amino-acid sequence, 520 residues long: Putative thymidine phosphorylase 1 (520 aa).

This sequence belongs to the thymidine/pyrimidine-nucleoside phosphorylase family. Type 2 subfamily.

It carries out the reaction thymidine + phosphate = 2-deoxy-alpha-D-ribose 1-phosphate + thymine. The chain is Putative thymidine phosphorylase 1 from Cupriavidus necator (strain ATCC 17699 / DSM 428 / KCTC 22496 / NCIMB 10442 / H16 / Stanier 337) (Ralstonia eutropha).